We begin with the raw amino-acid sequence, 104 residues long: Putative Fis-like DNA-binding protein (104 aa).

Positions 80-99 (QTKASELLGLNRGTLRKKLK) form a DNA-binding region, H-T-H motif.

The protein belongs to the transcriptional regulatory Fis family.

In Pseudomonas aeruginosa (strain ATCC 15692 / DSM 22644 / CIP 104116 / JCM 14847 / LMG 12228 / 1C / PRS 101 / PAO1), this protein is Putative Fis-like DNA-binding protein.